The sequence spans 906 residues: Cadherin-2 (906 aa).

An N-terminal signal peptide occupies residues Met-1–Ala-25. Residues Ser-26–Arg-159 constitute a propeptide that is removed on maturation. Phosphoserine occurs at positions 96 and 135. Cadherin domains are found at residues Asp-160 to Phe-267, Leu-268 to Phe-382, Thr-383 to Phe-497, Ala-498 to Pro-603, and Gln-604 to Arg-714. Residues Asp-160 to Ala-724 lie on the Extracellular side of the membrane. Glu-170 is a Ca(2+) binding site. Residue Asn-190 is glycosylated (N-linked (GlcNAc...) asparagine). Ca(2+) contacts are provided by Asp-226, Glu-228, Asp-259, Met-260, Asn-261, Asp-262, and Asn-263. A glycan (N-linked (GlcNAc...) asparagine) is linked at Asn-273. Residues Asp-293, Asp-295, and Asn-301 each contribute to the Ca(2+) site. Residue Asn-325 is glycosylated (N-linked (GlcNAc...) asparagine). Position 353 (Asp-353) interacts with Ca(2+). N-linked (GlcNAc...) asparagine glycosylation is found at Asn-402, Asn-572, Asn-622, Asn-651, and Asn-692. A helical transmembrane segment spans residues Ile-725 to Trp-745. Residues Met-746–Asp-906 lie on the Cytoplasmic side of the membrane. Over residues Ser-863–Gly-880 the composition is skewed to low complexity. The segment at Ser-863–Tyr-884 is disordered.

Homodimer (via extracellular region). Can also form heterodimers with other cadherins (via extracellular region). Dimerization occurs in trans, i.e. with a cadherin chain from another cell. Interacts with CDCP1. Interacts with PCDH8; this complex may also include TAOK2. The interaction with PCDH8 may lead to internalization through TAOK2/p38 MAPK pathway. Identified in a complex containing FGFR4, NCAM1, CDH2, PLCG1, FRS2, SRC, SHC1, GAP43 and CTTN. May interact with OBSCN (via protein kinase domain 2). Interacts with FBXO45. In terms of processing, cleaved by MMP24. Ectodomain cleavage leads to the generation of a soluble 90 kDa N-terminal soluble fragment and a 45 kDa membrane-bound C-terminal fragment 1 (CTF1), which is further cleaved by gamma-secretase into a 35 kDa. Cleavage in neural stem cells by MMP24 affects CDH2-mediated anchorage of neural stem cells to ependymocytes in the adult subependymal zone, leading to modulate neural stem cell quiescence. May be phosphorylated by OBSCN.

Its subcellular location is the cell membrane. The protein localises to the sarcolemma. It localises to the cell junction. The protein resides in the cell surface. It is found in the desmosome. Its subcellular location is the adherens junction. Calcium-dependent cell adhesion protein; preferentially mediates homotypic cell-cell adhesion by dimerization with a CDH2 chain from another cell. Cadherins may thus contribute to the sorting of heterogeneous cell types. Acts as a regulator of neural stem cells quiescence by mediating anchorage of neural stem cells to ependymocytes in the adult subependymal zone: upon cleavage by MMP24, CDH2-mediated anchorage is affected, leading to modulate neural stem cell quiescence. Plays a role in cell-to-cell junction formation between pancreatic beta cells and neural crest stem (NCS) cells, promoting the formation of processes by NCS cells. CDH2 may be involved in neuronal recognition mechanism. In hippocampal neurons, may regulate dendritic spine density. This chain is Cadherin-2 (CDH2), found in Rhinolophus ferrumequinum (Greater horseshoe bat).